Reading from the N-terminus, the 570-residue chain is NADPH oxidase 2 (570 aa).

The Cytoplasmic segment spans residues 2 to 9 (GNWAVNEG). The helical transmembrane segment at 10–36 (LSIFVILVWLGLNVFLFINYYKVYDDG) threads the bilayer. The Extracellular segment spans residues 37-46 (PKYNYTRKLL). Asn40 is a glycosylation site (N-linked (GlcNAc...) asparagine). Residues 47–72 (GSALALARAPAACLNFNCMLILLPVC) form a helical membrane-spanning segment. Positions 54 to 286 (RAPAACLNFN…MFLYLCERLV (233 aa)) constitute a Ferric oxidoreductase domain. The Cytoplasmic segment spans residues 73-95 (RNLLSFLRGSSACCSTRIRRQLD). The chain crosses the membrane as a helical span at residues 96 to 130 (RNLTFHKMVAWMIALHTAIHTIAHLFNVEWCVNAR). Heme b-binding residues include His101 and His115. Over 131–163 (VGISDRYSIALSDIGDNENEEYLNFAREKIKNP) the chain is Extracellular. Residues Lys159 and Lys161 each participate in a glycyl lysine isopeptide (Lys-Gly) (interchain with G-Cter in ubiquitin) cross-link. The chain crosses the membrane as a helical span at residues 164–194 (EGGLYVAVTRLAGITGIVITLCLILIITSST). The Cytoplasmic segment spans residues 195 to 203 (KTIRRSYFE). FAD is bound by residues Arg199 and Ser200. The helical transmembrane segment at 204–222 (VFWYTHHLFVIFFIGLAIH) threads the bilayer. Residues Trp206, His209, His222, Arg226, and Ile227 each contribute to the heme b site. The Extracellular segment spans residues 223–267 (GAERIVRGQTAESLEEHNLDICADKIEEWGKIKECPVPKFAGNPP). A Glycyl lysine isopeptide (Lys-Gly) (interchain with G-Cter in ubiquitin) cross-link involves residue Lys255. Heme b is bound by residues Met268, Tyr280, and Arg287. The helical transmembrane segment at 268 to 285 (MTWKWIVGPMFLYLCERL) threads the bilayer. Residues 286–570 (VRFWRSQQKV…VHFIFNKENF (285 aa)) are Cytoplasmic-facing. An FAD-binding FR-type domain is found at 287 to 397 (RFWRSQQKVV…DGPFGTASED (111 aa)). Residues Lys294, Lys299, Lys306, Lys328, and Lys334 each participate in a glycyl lysine isopeptide (Lys-Gly) (interchain with G-Cter in ubiquitin) cross-link. Residues Trp337, His338, Pro339, Thr341, His354, Arg356, Trp361, and Thr362 each contribute to the FAD site. Lys381 participates in a covalent cross-link: Glycyl lysine isopeptide (Lys-Gly) (interchain with G-Cter in ubiquitin). NADPH-binding residues include Ile411, Arg446, and Thr481. Lys506 is covalently cross-linked (Glycyl lysine isopeptide (Lys-Gly) (interchain with G-Cter in ubiquitin)). Position 513 (Arg513) interacts with NADPH. Lys567 is covalently cross-linked (Glycyl lysine isopeptide (Lys-Gly) (interchain with G-Cter in ubiquitin)).

Component of the phagocyte NADPH oxidase core complex/cytochrome b558 complex, composed of CYBB (heavy chain (beta)) and CYBA (light chain (alpha)). Component of the phagocyte NADPH oxidase complex composed of an obligatory core heterodimer formed by the membrane proteins CYBA and CYBB and the cytosolic regulatory subunits NCF1/p47-phox, NCF2/p67-phox, NCF4/p40-phox and the small GTPase RAC1 or RAC2. Interacts with NCF1 (phosphorylated form). Interacts with NCF2; the interaction is enhanced in the presence of GBP7. Interacts with RAC2. Interacts with RAC1. Interacts with calprotectin (S100A8/9). Interacts with NRROS; the interaction is direct and impairs formation of a stable NADPH oxidase complex. Interacts with CYBC1; CYBC1 may act as a chaperone stabilizing Cytochrome b-245 heterodimer. The CYBA:CYBB complex interacts with GBP7. It depends on FAD as a cofactor. Post-translationally, glycosylated. Phosphorylated on Ser and Thr residues by PKC during neutrophils activation. Phosphorylation enhances the NADPH oxidase activity and stimulates its interaction with RAC2, NCF2/p67-phox, and NCF1/p47-phox. In terms of processing, undergoes 'Lys-48'-linked polyubiquitination, likely by RNF145, triggering endoplasmic reticulum-associated degradation.

The protein resides in the cell membrane. It carries out the reaction NADPH + 2 O2 = 2 superoxide + NADP(+) + H(+). Catalytic subunit of the phagocyte NADPH oxidase complex that mediates the transfer of electrons from cytosolic NADPH to O2 to produce the superoxide anion (O2(-)). In the activated complex, electrons are first transferred from NADPH to flavin adenine dinucleotide (FAD) and subsequently transferred via two heme molecules to molecular oxygen, producing superoxide through an outer-sphere reaction. Activation of the NADPH oxidase complex is initiated by the assembly of cytosolic subunits of the NADPH oxidase complex with the core NADPH oxidase complex to form a complex at the plasma membrane or phagosomal membrane. This activation process is initiated by phosphorylation dependent binding of the cytosolic NCF1/p47-phox subunit to the C-terminus of CYBA/p22-phox. NADPH oxidase complex assembly is impaired through interaction with NRROS. This Mus musculus (Mouse) protein is NADPH oxidase 2.